We begin with the raw amino-acid sequence, 442 residues long: Ribosomal protein uS12 methylthiotransferase RimO (442 aa).

Residues 5 to 117 enclose the MTTase N-terminal domain; it reads PSIGVVSLGC…VLDAIHAALP (113 aa). [4Fe-4S] cluster is bound by residues Cys-14, Cys-50, Cys-79, Cys-148, Cys-152, and Cys-155. The Radical SAM core domain maps to 134-371; the sequence is LTPPHYAYLK…MAVQEAISRQ (238 aa). A TRAM domain is found at 374 to 441; sequence QRRVGQRQRV…AHDLYGMVVS (68 aa).

It belongs to the methylthiotransferase family. RimO subfamily. It depends on [4Fe-4S] cluster as a cofactor.

The protein localises to the cytoplasm. The enzyme catalyses L-aspartate(89)-[ribosomal protein uS12]-hydrogen + (sulfur carrier)-SH + AH2 + 2 S-adenosyl-L-methionine = 3-methylsulfanyl-L-aspartate(89)-[ribosomal protein uS12]-hydrogen + (sulfur carrier)-H + 5'-deoxyadenosine + L-methionine + A + S-adenosyl-L-homocysteine + 2 H(+). Catalyzes the methylthiolation of an aspartic acid residue of ribosomal protein uS12. The protein is Ribosomal protein uS12 methylthiotransferase RimO of Acidithiobacillus ferrooxidans (strain ATCC 53993 / BNL-5-31) (Leptospirillum ferrooxidans (ATCC 53993)).